The primary structure comprises 161 residues: Small ribosomal subunit protein uS9 (161 aa).

Disordered regions lie at residues 1–27 (MAQI…APKA) and 142–161 (KERK…FSKR).

Belongs to the universal ribosomal protein uS9 family.

This chain is Small ribosomal subunit protein uS9, found in Clavibacter michiganensis subsp. michiganensis (strain NCPPB 382).